The sequence spans 1405 residues: Tonsoku-like protein (1405 aa).

7 TPR repeats span residues 23–56 (AVSCNQLGDFYNQQGKYTDAVREYVQEAQIYASM), 63–96 (AKAKRMVGEMYTLLCDYDAAKDHINDYLKIAKRL), 163–196 (ARCYLNIGVVKEHMEAFQESIEYIDKAIKISKTH), 203–237 (HLCYISMSLLYICKKNDATAALRFCNMALEVAKRF), 245–278 (CETLITKAEILIKAGDFASAKQILTKAYKKNTPD), 314–347 (KGLYEKLGDGCCHLMNYEKALTYYQKMLENAELN), and 355–388 (VPIYVSLYQTYRDNGQFDKALEYLWKEFELNQDA). One copy of the LRR 1 repeat lies at 153–181 (ISKLEQLDMQARCYLNIGVVKEHMEAFQE). Residues 439–465 (MVRLRRLMLKHNMQVLVENLEADATAK) form an LRR 2 repeat. The disordered stretch occupies residues 465 to 535 (KGIDLDQEES…RGNRTLVIKK (71 aa)). Over residues 469–483 (LDQEESVGDDEEESD) the composition is skewed to acidic residues. 3 ANK repeats span residues 538–567 (KGETQLHQACISGNLELVRRLIDQGHTVNV), 571–600 (AGWLPLHEACNHGYREIVELLLDKGAASAI), and 609–638 (DGITPLFDACSNGFLDVAELLLDRGADATV). Disordered regions lie at residues 695–753 (FNAK…KEYR), 806–827 (KRINSGDLSRRTSKENFQDTAL), and 841–880 (TPENEYSQRQKQMRKLTLSRSSSMSSNHSSSATSSRKKHQ). S707 and S709 each carry phosphoserine. Over residues 813–822 (LSRRTSKENF) the composition is skewed to basic and acidic residues. Over residues 841–850 (TPENEYSQRQ) the composition is skewed to polar residues. Low complexity predominate over residues 859 to 874 (SRSSSMSSNHSSSATS). 4 positions are modified to phosphoserine: S893, S895, S899, and S902. LRR repeat units lie at residues 1085-1108 (QARLTVLDLSCNFIGNEGCQQLAK), 1113-1137 (LLQLKALRLQCNAIGSHGLEALLCG), 1143-1166 (LELLEELNLNQNPLGNASVRILSK), 1186-1211 (LTELQDFDLGFNKLTRFDISFNQLTQ), 1287-1311 (AKQLQMLDISDNSNLSGTTLGYILD), and 1333-1357 (LQKLEQLKQLPRRLELTVDEQVFSM).

This sequence belongs to the Tonsoku family.

It is found in the nucleus. The protein localises to the nucleoplasm. It localises to the chromosome. Histone reader involved in homologous recombination-mediated repair of double-strand breaks (DSBs) at stalled or collapsed replication forks. Specifically recognizes and binds histone H3.1. The protein is Tonsoku-like protein of Drosophila melanogaster (Fruit fly).